The following is a 261-amino-acid chain: Cytochrome c oxidase subunit 3 (261 aa).

Topologically, residues 1–15 are mitochondrial matrix; the sequence is MTHQTHACHMVNPSP. Residues 16–34 form a helical membrane-spanning segment; the sequence is WPLTGALSGLLMTSGLIMW. Residues 35-40 lie on the Mitochondrial intermembrane side of the membrane; the sequence is FHFNST. Residues 41 to 66 form a helical membrane-spanning segment; sequence TLLMLGLTTNMLTMYQWWRDVIREST. At 67-72 the chain is on the mitochondrial matrix side; the sequence is FQGHHT. Residues 73-105 traverse the membrane as a helical segment; the sequence is PNVQKGLRYGMILFIISEVLFFTGFFWAFYHSS. At 106–128 the chain is on the mitochondrial intermembrane side; it reads LAPTPELGGCWPPTGIHPLNPLE. Residues 129 to 152 traverse the membrane as a helical segment; the sequence is VPLLNTSVLLASGVSITWAHHSLM. Over 153–155 the chain is Mitochondrial matrix; sequence EGN. A helical membrane pass occupies residues 156 to 183; that stretch reads RNHMLQALFITIALGVYFTLLQASEYYE. Topologically, residues 184 to 190 are mitochondrial intermembrane; the sequence is APFTISD. A helical transmembrane segment spans residues 191–223; the sequence is GVYGSTFFVATGFHGLHVIIGSTFLIVCFFRQL. The Mitochondrial matrix portion of the chain corresponds to 224 to 232; that stretch reads KFHFTSSHH. Residues 233–256 form a helical membrane-spanning segment; the sequence is FGFEAAAWYWHFVDVVWLFLYVSI. Over 257 to 261 the chain is Mitochondrial intermembrane; it reads YWWGS.

Belongs to the cytochrome c oxidase subunit 3 family. In terms of assembly, component of the cytochrome c oxidase (complex IV, CIV), a multisubunit enzyme composed of 14 subunits. The complex is composed of a catalytic core of 3 subunits MT-CO1, MT-CO2 and MT-CO3, encoded in the mitochondrial DNA, and 11 supernumerary subunits COX4I, COX5A, COX5B, COX6A, COX6B, COX6C, COX7A, COX7B, COX7C, COX8 and NDUFA4, which are encoded in the nuclear genome. The complex exists as a monomer or a dimer and forms supercomplexes (SCs) in the inner mitochondrial membrane with NADH-ubiquinone oxidoreductase (complex I, CI) and ubiquinol-cytochrome c oxidoreductase (cytochrome b-c1 complex, complex III, CIII), resulting in different assemblies (supercomplex SCI(1)III(2)IV(1) and megacomplex MCI(2)III(2)IV(2)).

The protein localises to the mitochondrion inner membrane. The enzyme catalyses 4 Fe(II)-[cytochrome c] + O2 + 8 H(+)(in) = 4 Fe(III)-[cytochrome c] + 2 H2O + 4 H(+)(out). Its function is as follows. Component of the cytochrome c oxidase, the last enzyme in the mitochondrial electron transport chain which drives oxidative phosphorylation. The respiratory chain contains 3 multisubunit complexes succinate dehydrogenase (complex II, CII), ubiquinol-cytochrome c oxidoreductase (cytochrome b-c1 complex, complex III, CIII) and cytochrome c oxidase (complex IV, CIV), that cooperate to transfer electrons derived from NADH and succinate to molecular oxygen, creating an electrochemical gradient over the inner membrane that drives transmembrane transport and the ATP synthase. Cytochrome c oxidase is the component of the respiratory chain that catalyzes the reduction of oxygen to water. Electrons originating from reduced cytochrome c in the intermembrane space (IMS) are transferred via the dinuclear copper A center (CU(A)) of subunit 2 and heme A of subunit 1 to the active site in subunit 1, a binuclear center (BNC) formed by heme A3 and copper B (CU(B)). The BNC reduces molecular oxygen to 2 water molecules using 4 electrons from cytochrome c in the IMS and 4 protons from the mitochondrial matrix. The sequence is that of Cytochrome c oxidase subunit 3 (MT-CO3) from Gazella saudiya (Saudi gazelle).